The sequence spans 529 residues: Bifunctional purine biosynthesis protein PurH (529 aa).

The MGS-like domain occupies 1 to 148 (MEQSFLPIRC…KNYKYVTVVV (148 aa)).

Belongs to the PurH family.

It carries out the reaction (6R)-10-formyltetrahydrofolate + 5-amino-1-(5-phospho-beta-D-ribosyl)imidazole-4-carboxamide = 5-formamido-1-(5-phospho-D-ribosyl)imidazole-4-carboxamide + (6S)-5,6,7,8-tetrahydrofolate. It catalyses the reaction IMP + H2O = 5-formamido-1-(5-phospho-D-ribosyl)imidazole-4-carboxamide. It functions in the pathway purine metabolism; IMP biosynthesis via de novo pathway; 5-formamido-1-(5-phospho-D-ribosyl)imidazole-4-carboxamide from 5-amino-1-(5-phospho-D-ribosyl)imidazole-4-carboxamide (10-formyl THF route): step 1/1. The protein operates within purine metabolism; IMP biosynthesis via de novo pathway; IMP from 5-formamido-1-(5-phospho-D-ribosyl)imidazole-4-carboxamide: step 1/1. The protein is Bifunctional purine biosynthesis protein PurH of Wigglesworthia glossinidia brevipalpis.